Consider the following 90-residue polypeptide: Probable Fe(2+)-trafficking protein (90 aa).

Belongs to the Fe(2+)-trafficking protein family.

Functionally, could be a mediator in iron transactions between iron acquisition and iron-requiring processes, such as synthesis and/or repair of Fe-S clusters in biosynthetic enzymes. This Cupriavidus pinatubonensis (strain JMP 134 / LMG 1197) (Cupriavidus necator (strain JMP 134)) protein is Probable Fe(2+)-trafficking protein.